A 205-amino-acid polypeptide reads, in one-letter code: GTP cyclohydrolase-2 (205 aa).

Residue 49–53 (RLHSE) coordinates GTP. Zn(2+) contacts are provided by C54, C65, and C67. Residues Q70, 92-94 (EGR), and T114 each bind GTP. D126 acts as the Proton acceptor in catalysis. The Nucleophile role is filled by R128. The GTP site is built by T149 and K154.

The protein belongs to the GTP cyclohydrolase II family. Requires Zn(2+) as cofactor.

It catalyses the reaction GTP + 4 H2O = 2,5-diamino-6-hydroxy-4-(5-phosphoribosylamino)-pyrimidine + formate + 2 phosphate + 3 H(+). Its pathway is cofactor biosynthesis; riboflavin biosynthesis; 5-amino-6-(D-ribitylamino)uracil from GTP: step 1/4. Catalyzes the conversion of GTP to 2,5-diamino-6-ribosylamino-4(3H)-pyrimidinone 5'-phosphate (DARP), formate and pyrophosphate. This is GTP cyclohydrolase-2 from Pseudomonas aeruginosa (strain UCBPP-PA14).